Reading from the N-terminus, the 511-residue chain is V-type proton ATPase subunit B, brain isoform (511 aa).

Arg-400 provides a ligand contact to ATP.

This sequence belongs to the ATPase alpha/beta chains family. V-ATPase is a heteromultimeric enzyme made up of two complexes: the ATP-hydrolytic V1 complex and the proton translocation V0 complex. The V1 complex consists of three catalytic AB heterodimers that form a heterohexamer, three peripheral stalks each consisting of EG heterodimers, one central rotor including subunits D and F, and the regulatory subunits C and H. The proton translocation complex V0 consists of the proton transport subunit a, a ring of proteolipid subunits c9c'', rotary subunit d, subunits e and f, and the accessory subunits ATP6AP1/Ac45 and ATP6AP2/PRR. As to expression, kidney; localizes to early distal nephron, encompassing thick ascending limbs and distal convoluted tubules (at protein level).

Its subcellular location is the apical cell membrane. The protein resides in the melanosome. The protein localises to the cytoplasm. It localises to the cytoplasmic vesicle. It is found in the secretory vesicle. Its subcellular location is the synaptic vesicle membrane. The protein resides in the clathrin-coated vesicle membrane. In terms of biological role, non-catalytic subunit of the V1 complex of vacuolar(H+)-ATPase (V-ATPase), a multisubunit enzyme composed of a peripheral complex (V1) that hydrolyzes ATP and a membrane integral complex (V0) that translocates protons. V-ATPase is responsible for acidifying and maintaining the pH of intracellular compartments and in some cell types, is targeted to the plasma membrane, where it is responsible for acidifying the extracellular environment. In renal intercalated cells, can partially compensate the lack of ATP6V1B1 and mediate secretion of protons (H+) into the urine under base-line conditions but not in conditions of acid load. This Homo sapiens (Human) protein is V-type proton ATPase subunit B, brain isoform (ATP6V1B2).